Here is a 315-residue protein sequence, read N- to C-terminus: HPr kinase/phosphorylase (315 aa).

Active-site residues include histidine 140 and lysine 161. ATP is bound at residue 155–162 (GDSGVGKS). Serine 162 provides a ligand contact to Mg(2+). The active-site Proton acceptor; for phosphorylation activity. Proton donor; for dephosphorylation activity is the aspartate 179. Residues 203–212 (LEIRGIGIID) are important for the catalytic mechanism of both phosphorylation and dephosphorylation. Glutamate 204 contacts Mg(2+). The active site involves arginine 245. The interval 266–271 (PVKTGR) is important for the catalytic mechanism of dephosphorylation.

Belongs to the HPrK/P family. Homohexamer. Mg(2+) serves as cofactor.

The catalysed reaction is [HPr protein]-L-serine + ATP = [HPr protein]-O-phospho-L-serine + ADP + H(+). It catalyses the reaction [HPr protein]-O-phospho-L-serine + phosphate + H(+) = [HPr protein]-L-serine + diphosphate. Its function is as follows. Catalyzes the ATP- as well as the pyrophosphate-dependent phosphorylation of a specific serine residue in HPr, a phosphocarrier protein of the phosphoenolpyruvate-dependent sugar phosphotransferase system (PTS). HprK/P also catalyzes the pyrophosphate-producing, inorganic phosphate-dependent dephosphorylation (phosphorolysis) of seryl-phosphorylated HPr (P-Ser-HPr). The two antagonistic activities of HprK/P are regulated by several intracellular metabolites, which change their concentration in response to the absence or presence of rapidly metabolisable carbon sources (glucose, fructose, etc.) in the growth medium. Therefore, by controlling the phosphorylation state of HPr, HPrK/P is a sensor enzyme that plays a major role in the regulation of carbon metabolism and sugar transport: it mediates carbon catabolite repression (CCR), and regulates PTS-catalyzed carbohydrate uptake and inducer exclusion. This chain is HPr kinase/phosphorylase, found in Lactiplantibacillus plantarum (strain ATCC BAA-793 / NCIMB 8826 / WCFS1) (Lactobacillus plantarum).